The primary structure comprises 492 residues: 2-succinylbenzoate--CoA ligase (492 aa).

It belongs to the ATP-dependent AMP-binding enzyme family. MenE subfamily.

It carries out the reaction 2-succinylbenzoate + ATP + CoA = 2-succinylbenzoyl-CoA + AMP + diphosphate. It functions in the pathway quinol/quinone metabolism; 1,4-dihydroxy-2-naphthoate biosynthesis; 1,4-dihydroxy-2-naphthoate from chorismate: step 5/7. It participates in quinol/quinone metabolism; menaquinone biosynthesis. Converts 2-succinylbenzoate (OSB) to 2-succinylbenzoyl-CoA (OSB-CoA). The polypeptide is 2-succinylbenzoate--CoA ligase (Staphylococcus aureus (strain Mu3 / ATCC 700698)).